Reading from the N-terminus, the 158-residue chain is NAD(P)H-quinone oxidoreductase subunit N (158 aa).

The protein belongs to the complex I NdhN subunit family. In terms of assembly, NDH-1 can be composed of about 15 different subunits; different subcomplexes with different compositions have been identified which probably have different functions.

The protein localises to the cellular thylakoid membrane. The enzyme catalyses a plastoquinone + NADH + (n+1) H(+)(in) = a plastoquinol + NAD(+) + n H(+)(out). It carries out the reaction a plastoquinone + NADPH + (n+1) H(+)(in) = a plastoquinol + NADP(+) + n H(+)(out). Its function is as follows. NDH-1 shuttles electrons from an unknown electron donor, via FMN and iron-sulfur (Fe-S) centers, to quinones in the respiratory and/or the photosynthetic chain. The immediate electron acceptor for the enzyme in this species is believed to be plastoquinone. Couples the redox reaction to proton translocation, and thus conserves the redox energy in a proton gradient. Cyanobacterial NDH-1 also plays a role in inorganic carbon-concentration. The chain is NAD(P)H-quinone oxidoreductase subunit N from Cyanothece sp. (strain PCC 7425 / ATCC 29141).